The sequence spans 216 residues: Adenylate kinase (216 aa).

G10–T15 contributes to the ATP binding site. An NMP region spans residues S30–V59. Residues T31, R36, A57–V59, G85–R88, and Q92 each bind AMP. An LID region spans residues G126 to D163. R127 lines the ATP pocket. Zn(2+) is bound by residues C130, C133, C150, and C153. The AMP site is built by R160 and R171. K199 provides a ligand contact to ATP.

The protein belongs to the adenylate kinase family. As to quaternary structure, monomer.

It is found in the cytoplasm. It catalyses the reaction AMP + ATP = 2 ADP. Its pathway is purine metabolism; AMP biosynthesis via salvage pathway; AMP from ADP: step 1/1. In terms of biological role, catalyzes the reversible transfer of the terminal phosphate group between ATP and AMP. Plays an important role in cellular energy homeostasis and in adenine nucleotide metabolism. The sequence is that of Adenylate kinase from Syntrophotalea carbinolica (strain DSM 2380 / NBRC 103641 / GraBd1) (Pelobacter carbinolicus).